The chain runs to 129 residues: Protein UL131A (129 aa).

The signal sequence occupies residues 1–18 (MRLCRVWLSVCLCAVVLG).

Forms the envelope pentamer complex (PC) composed of gH, gL, UL128, UL130, and UL131A. The pentamer interacts with host NRP2. The interaction with gH is important for the formation of UL128, UL130, gH-gL complex.

The protein resides in the virion membrane. Plays a role in viral entry into host cells. Forms a pentameric complex at the surface of the viral envelope together with gH, gL, UL130 and UL131. This complex is required for entry in epithelial, endothelial and myeloid host cells. Mechanistically, engages host receptor(s) including neurophilin 2/NRP2 to mediate infection. Contributes to the formation of the complex between UL128, UL130 and gH-gL. The polypeptide is Protein UL131A (UL131A) (Human cytomegalovirus (strain Merlin) (HHV-5)).